Here is a 250-residue protein sequence, read N- to C-terminus: Ubiquitin-conjugating enzyme E2 6 (250 aa).

Residues 1–232 lie on the Cytoplasmic side of the membrane; it reads MATKQAHKRL…DGKEPNDSSS (232 aa). The UBC core domain maps to 5 to 167; it reads QAHKRLTKEY…VQENVETLEK (163 aa). The active-site Glycyl thioester intermediate is the C87. Phosphoserine is present on S139. T178 is subject to Phosphothreonine. Residues 209-229 form a disordered region; that stretch reads AEQALRQSENNSKKDGKEPND. A compositionally biased stretch (basic and acidic residues) spans 219–228; it reads NSKKDGKEPN. Residues 233–249 traverse the membrane as a helical segment; that stretch reads MVYIGIAIFLFLVGLFM.

It belongs to the ubiquitin-conjugating enzyme family.

Its subcellular location is the endoplasmic reticulum membrane. The catalysed reaction is S-ubiquitinyl-[E1 ubiquitin-activating enzyme]-L-cysteine + [E2 ubiquitin-conjugating enzyme]-L-cysteine = [E1 ubiquitin-activating enzyme]-L-cysteine + S-ubiquitinyl-[E2 ubiquitin-conjugating enzyme]-L-cysteine.. It functions in the pathway protein modification; protein ubiquitination. In terms of biological role, catalyzes the covalent attachment of ubiquitin to other proteins. Functions in degradation of misfolded or regulated proteins localized in the endoplasmic reticulum (ER) lumen or membrane via the ubiquitin-proteasome system. Cognate E2 conjugating enzyme for the DOA10 ubiquitin ligase complex, which is part of the ERAD-C pathway responsible for the rapid degradation of membrane proteins with misfolded cytoplasmic domains. This is Ubiquitin-conjugating enzyme E2 6 (UBC6) from Saccharomyces cerevisiae (strain ATCC 204508 / S288c) (Baker's yeast).